The sequence spans 137 residues: Small ribosomal subunit protein uS19 (137 aa).

Residues 115–137 (RNRVSHGSAGVGATRSSKFVPLK) are disordered.

This sequence belongs to the universal ribosomal protein uS19 family.

In terms of biological role, protein S19 forms a complex with S13 that binds strongly to the 16S ribosomal RNA. This chain is Small ribosomal subunit protein uS19, found in Methanococcoides burtonii (strain DSM 6242 / NBRC 107633 / OCM 468 / ACE-M).